Consider the following 63-residue polypeptide: U-reduvitoxin-Pr4a (63 aa).

The first 19 residues, 1-19, serve as a signal peptide directing secretion; it reads MKIFGLFLLIATYMALAFA. Intrachain disulfides connect Cys-24–Cys-40, Cys-31–Cys-45, and Cys-39–Cys-52.

It belongs to the venom Ptu1-like knottin family. Expressed by the venom gland.

Its subcellular location is the secreted. Functionally, binds reversibly and blocks P/Q-type voltage-gated calcium channels (Cav). This chain is U-reduvitoxin-Pr4a, found in Platymeris rhadamanthus (Red spot assassin bug).